A 966-amino-acid polypeptide reads, in one-letter code: Probable LIM domain-containing serine/threonine-protein kinase DDB_G0286997 (966 aa).

2 consecutive LIM zinc-binding domains span residues 3-62 (SRCG…LNAP) and 63-120 (KCFK…KPPP). 2 disordered regions span residues 208 to 291 (YSLS…PTED) and 331 to 588 (PLNQ…EQQV). Residues 211 to 231 (SSPSSSSSSSSSSSSSSSSPP) are compositionally biased toward low complexity. Positions 232–269 (NTFNKSSDFLRNPLNNNVKSSSSSIGGNFVNKSQQQQQ) are enriched in polar residues. Composition is skewed to low complexity over residues 270–284 (PIDS…ISPS) and 331–350 (PLNQ…SPNL). Residues 374 to 389 (TTTFSNPLLKTKNQSF) are compositionally biased toward polar residues. The span at 419 to 430 (PLPPPPITPIPS) shows a compositional bias: pro residues. A compositionally biased stretch (low complexity) spans 431-449 (PSSSSIIINNQQQQQQESQ). The segment covering 490-511 (KPIVLPPPPLDMEQLPLPPPPL) has biased composition (pro residues). Residues 513–526 (SSQINQSLKSTQHN) are compositionally biased toward polar residues. A compositionally biased stretch (low complexity) spans 543–560 (IQKQSIPTRKPQLPQSSN). A compositionally biased stretch (pro residues) spans 561–570 (PSPPSPPSPQ). Residues 702–959 (VIFGDVIAAG…DTLKKISESL (258 aa)) enclose the Protein kinase domain. ATP-binding positions include 708–716 (IAAGASGKV) and lysine 729. Residue aspartate 825 is the Proton acceptor of the active site.

The protein belongs to the protein kinase superfamily. TKL Ser/Thr protein kinase family.

The catalysed reaction is L-seryl-[protein] + ATP = O-phospho-L-seryl-[protein] + ADP + H(+). It catalyses the reaction L-threonyl-[protein] + ATP = O-phospho-L-threonyl-[protein] + ADP + H(+). This Dictyostelium discoideum (Social amoeba) protein is Probable LIM domain-containing serine/threonine-protein kinase DDB_G0286997.